Here is a 271-residue protein sequence, read N- to C-terminus: Formamidopyrimidine-DNA glycosylase (271 aa).

The Schiff-base intermediate with DNA role is filled by Pro-2. The active-site Proton donor is Glu-3. Lys-58 acts as the Proton donor; for beta-elimination activity in catalysis. 2 residues coordinate DNA: Arg-110 and Arg-152. The FPG-type zinc-finger motif lies at 237-271 (AVYGQTGKPCTVCGTPIARIRLGNRSTWFCPVCQK). Catalysis depends on Arg-261, which acts as the Proton donor; for delta-elimination activity.

Belongs to the FPG family. As to quaternary structure, monomer. The cofactor is Zn(2+).

It catalyses the reaction Hydrolysis of DNA containing ring-opened 7-methylguanine residues, releasing 2,6-diamino-4-hydroxy-5-(N-methyl)formamidopyrimidine.. It carries out the reaction 2'-deoxyribonucleotide-(2'-deoxyribose 5'-phosphate)-2'-deoxyribonucleotide-DNA = a 3'-end 2'-deoxyribonucleotide-(2,3-dehydro-2,3-deoxyribose 5'-phosphate)-DNA + a 5'-end 5'-phospho-2'-deoxyribonucleoside-DNA + H(+). Involved in base excision repair of DNA damaged by oxidation or by mutagenic agents. Acts as a DNA glycosylase that recognizes and removes damaged bases. Has a preference for oxidized purines, such as 7,8-dihydro-8-oxoguanine (8-oxoG). Has AP (apurinic/apyrimidinic) lyase activity and introduces nicks in the DNA strand. Cleaves the DNA backbone by beta-delta elimination to generate a single-strand break at the site of the removed base with both 3'- and 5'-phosphates. The chain is Formamidopyrimidine-DNA glycosylase from Geobacter sulfurreducens (strain ATCC 51573 / DSM 12127 / PCA).